Reading from the N-terminus, the 383-residue chain is Mannitol-1-phosphate 5-dehydrogenase (383 aa).

NAD(+) is bound at residue 3–14 (AVHFGAGNIGRG).

It belongs to the mannitol dehydrogenase family.

It carries out the reaction D-mannitol 1-phosphate + NAD(+) = beta-D-fructose 6-phosphate + NADH + H(+). The protein is Mannitol-1-phosphate 5-dehydrogenase of Lacticaseibacillus casei (strain BL23) (Lactobacillus casei).